Consider the following 287-residue polypeptide: MKSLYDICAPAKLNLFLHITGRRSDGYHLLQSVFMLIDWCDTLHFDLRVDGQISREDLATPLPFDDLVVRAARALKAASGSPLGVHVGIEKCIPAQAGMGGGSSDAASTLLALNHLWRLNFSLEKLISIGLQLGADVPFFLGGHNAWVEGIGEKMDPVVLPSGRFLVVKPVEGLETRLIFSDPALKRDSETAIISGFAANAFGFGRNDLQSVAQRLCPGVTQALEWLASRGLSGRMTGSGSAVFAQTLQDVDLRGAPSGFQVRLCKSLDVHPLVGWAVSDRLSVGSA.

Residue lysine 12 is part of the active site. 94-104 (PAQAGMGGGSS) serves as a coordination point for ATP. Aspartate 136 is a catalytic residue.

Belongs to the GHMP kinase family. IspE subfamily.

The catalysed reaction is 4-CDP-2-C-methyl-D-erythritol + ATP = 4-CDP-2-C-methyl-D-erythritol 2-phosphate + ADP + H(+). The protein operates within isoprenoid biosynthesis; isopentenyl diphosphate biosynthesis via DXP pathway; isopentenyl diphosphate from 1-deoxy-D-xylulose 5-phosphate: step 3/6. In terms of biological role, catalyzes the phosphorylation of the position 2 hydroxy group of 4-diphosphocytidyl-2C-methyl-D-erythritol. The polypeptide is 4-diphosphocytidyl-2-C-methyl-D-erythritol kinase (Albidiferax ferrireducens (strain ATCC BAA-621 / DSM 15236 / T118) (Rhodoferax ferrireducens)).